The sequence spans 391 residues: Geranylgeranyl diphosphate reductase (391 aa).

The protein belongs to the geranylgeranyl reductase family. ChlP subfamily.

It carries out the reaction phytyl diphosphate + 3 NADP(+) = geranylgeranyl diphosphate + 3 NADPH + 3 H(+). It participates in porphyrin-containing compound metabolism; bacteriochlorophyll biosynthesis (light-independent). Functionally, catalyzes the stepwise hydrogenation of geranylgeraniol to phytol during bacteriochlorophyll A (BchlA) biosynthesis. This Rhodobacter capsulatus (strain ATCC BAA-309 / NBRC 16581 / SB1003) protein is Geranylgeranyl diphosphate reductase (bchP).